A 342-amino-acid chain; its full sequence is Anthranilate phosphoribosyltransferase (342 aa).

5-phospho-alpha-D-ribose 1-diphosphate-binding positions include Gly-84, 87 to 88 (GD), Thr-92, 94 to 97 (NIST), 112 to 120 (KHGGRSVSS), and Ser-124. Gly-84 is an anthranilate binding site. Ser-96 contacts Mg(2+). Arg-170 is a binding site for anthranilate. The Mg(2+) site is built by Asp-229 and Glu-230.

It belongs to the anthranilate phosphoribosyltransferase family. In terms of assembly, homodimer. Mg(2+) serves as cofactor.

It catalyses the reaction N-(5-phospho-beta-D-ribosyl)anthranilate + diphosphate = 5-phospho-alpha-D-ribose 1-diphosphate + anthranilate. The protein operates within amino-acid biosynthesis; L-tryptophan biosynthesis; L-tryptophan from chorismate: step 2/5. Catalyzes the transfer of the phosphoribosyl group of 5-phosphorylribose-1-pyrophosphate (PRPP) to anthranilate to yield N-(5'-phosphoribosyl)-anthranilate (PRA). The chain is Anthranilate phosphoribosyltransferase from Verminephrobacter eiseniae (strain EF01-2).